The chain runs to 295 residues: Cutinase 11 (295 aa).

The signal sequence occupies residues 1–17 (MQTSALLLAAQALVASA). The cysteines at positions 25 and 102 are disulfide-linked. Active-site residues include S113, D198, and H210. C184 and C202 are disulfide-bonded. The tract at residues 228–258 (KLNSGGSPPTTPPTTPPTTPPTTPPTTPPPS) is disordered. Positions 236-258 (PTTPPTTPPTTPPTTPPTTPPPS) are enriched in pro residues. The 36-residue stretch at 260–295 (SCAALYGQCGGQGWNGATCCSQGTCRASNQWYSQCL) folds into the CBM1 domain.

Belongs to the cutinase family. Post-translationally, the 2 disulfide bonds play a critical role in holding the catalytic residues in juxta-position; reduction of the disulfide bridges results in the complete inactivation of the enzyme.

It is found in the secreted. The catalysed reaction is cutin + H2O = cutin monomers.. In terms of biological role, catalyzes the hydrolysis of complex carboxylic polyesters found in the cell wall of plants. May degrade cutin, a macromolecule that forms the structure of the plant cuticle. May also degrade suberin, a specialized macromolecule found in the cell wall of various plant tissues. Allows pathogenic fungi to penetrate through the cuticular barrier into the host plant during the initial stage of fungal infection. Involved in pathogenesis. This chain is Cutinase 11, found in Verticillium dahliae (Verticillium wilt).